The sequence spans 468 residues: Mitochondrial adenyl nucleotide antiporter SLC25A23 (468 aa).

The segment at 1 to 149 is regulatory N-terminal domain; sequence MRGSPGDAER…DHFLLHSLEN (149 aa). Topologically, residues 1–188 are mitochondrial intermembrane; that stretch reads MRGSPGDAER…EKLTGMWWKQ (188 aa). Residues 9–44 enclose the EF-hand 1 domain; it reads ERRQRWGRLFEELDSNKDGRVDVHELRQGLARLGGG. Residues aspartate 22, asparagine 24, aspartate 26, arginine 28, and glutamate 33 each coordinate Ca(2+). The disordered stretch occupies residues 34–67; that stretch reads LRQGLARLGGGNPDPGAQQGISSEGDADPDGGLD. Residues 58–67 are compositionally biased toward acidic residues; it reads GDADPDGGLD. EF-hand domains follow at residues 77–112 and 113–148; these read EREQRLLLMFHSLDRNQDGHIDVSEIQQSFRALGIS and ISLEQAEKILHSMDRDGTMTIDWQEWRDHFLLHSLE. Aspartate 90, asparagine 92, aspartate 94, histidine 96, and glutamate 101 together coordinate Ca(2+). The interval 150-159 is linker region; that stretch reads VEDVLYFWKH. Positions 165-468 are C-terminal transmembrane transporter domain; it reads IGECLTVPDE…MKQALGVTSR (304 aa). 3 Solcar repeats span residues 183–269, 277–362, and 374–462; these read GMWW…IKRA, LHVQ…LKNW, and PGIL…MKQA. Residues 189 to 206 form a helical membrane-spanning segment; the sequence is LVAGAVAGAVSRTGTAPL. Topologically, residues 207 to 243 are mitochondrial matrix; that stretch reads DRLKVFMQVHASKTNRLNILGGLRSMVLEGGIRSLWR. A helical transmembrane segment spans residues 244–263; it reads GNGINVLKIAPESAIKFMAY. At 264-286 the chain is on the mitochondrial intermembrane side; that stretch reads EQIKRAILGQQETLHVQERFVAG. The helical transmembrane segment at 287–300 threads the bilayer; sequence SLAGATAQTIIYPM. Over 301-336 the chain is Mitochondrial matrix; sequence EVLKTRLTLRRTGQYKGLLDCARRILEREGPRAFYR. The helical transmembrane segment at 337 to 356 threads the bilayer; the sequence is GYLPNVLGIIPYAGIDLAVY. The Mitochondrial intermembrane portion of the chain corresponds to 357-379; that stretch reads ETLKNWWLQQYSHDSADPGILVL. A helical membrane pass occupies residues 380–397; that stretch reads LACGTISSTCGQIASYPL. At 398–436 the chain is on the mitochondrial matrix side; that stretch reads ALVRTRMQAQASIEGGPQLSMLGLLRHILSQEGMRGLYR. The helical transmembrane segment at 437–456 threads the bilayer; that stretch reads GIAPNFMKVIPAVSISYVVY. Over 457–468 the chain is Mitochondrial intermembrane; sequence ENMKQALGVTSR.

It belongs to the mitochondrial carrier (TC 2.A.29) family. Interacts with MCU. Interacts with MICU1. In terms of tissue distribution, expressed at low levels in most tissues examined, with highest expression in brain, skeletal muscle and pancreas.

It is found in the mitochondrion inner membrane. The catalysed reaction is Mg(2+)(out) + phosphate(in) + ATP(out) = Mg(2+)(in) + phosphate(out) + ATP(in). It catalyses the reaction ADP(out) + phosphate(in) + H(+)(out) = ADP(in) + phosphate(out) + H(+)(in). It carries out the reaction AMP(out) + phosphate(in) = AMP(in) + phosphate(out). The enzyme catalyses phosphate(in) + ATP(out) + 2 H(+)(out) = phosphate(out) + ATP(in) + 2 H(+)(in). The catalysed reaction is dADP(in) + ADP(out) = dADP(out) + ADP(in). It catalyses the reaction Mg(2+)(in) + ADP(out) + ATP(in) + H(+)(out) = Mg(2+)(out) + ADP(in) + ATP(out) + H(+)(in). It carries out the reaction ADP(out) + diphosphate(in) = ADP(in) + diphosphate(out). The enzyme catalyses dAMP(in) + ADP(out) + H(+)(out) = dAMP(out) + ADP(in) + H(+)(in). The catalysed reaction is 3'-AMP(in) + ADP(out) + H(+)(out) = 3'-AMP(out) + ADP(in) + H(+)(in). It catalyses the reaction dAMP(out) + phosphate(in) = dAMP(in) + phosphate(out). It carries out the reaction 3'-AMP(out) + phosphate(in) = 3'-AMP(in) + phosphate(out). The enzyme catalyses dADP(out) + phosphate(in) + H(+)(out) = dADP(in) + phosphate(out) + H(+)(in). Its activity is regulated as follows. Activated by an increase in cytosolic calcium levels that induce a conformational change of the N-terminal regulatory domain, uncapping the channel and allowing transport. Inhibited by bathophenanthroline, mersalyl, p-hydroxymercuribenzoate, bromcresol purple, tannic acid, pyridoxal 5'-phosphate and p-hydroxymercuribenzoate. Its function is as follows. Electroneutral antiporter that mediates the transport of adenine nucleotides through the inner mitochondrial membrane. Originally identified as an ATP-magnesium/inorganic phosphate antiporter, it also acts as a broad specificity adenyl nucleotide antiporter. By regulating the mitochondrial matrix adenine nucleotide pool could adapt to changing cellular energetic demands and indirectly regulate adenine nucleotide-dependent metabolic pathways. Also acts as a regulator of mitochondrial calcium uptake and can probably transport trace amounts of other divalent metal cations in complex with ATP. In vitro, a low activity is also observed with guanyl and pyrimidine nucleotides. This chain is Mitochondrial adenyl nucleotide antiporter SLC25A23, found in Homo sapiens (Human).